Here is a 499-residue protein sequence, read N- to C-terminus: Cobyric acid synthase (499 aa).

Residues 251–442 enclose the GATase cobBQ-type domain; the sequence is SLDIAVVSLK…LHGVFDNLEW (192 aa). Catalysis depends on Cys332, which acts as the Nucleophile. His434 is an active-site residue.

This sequence belongs to the CobB/CobQ family. CobQ subfamily.

Its pathway is cofactor biosynthesis; adenosylcobalamin biosynthesis. In terms of biological role, catalyzes amidations at positions B, D, E, and G on adenosylcobyrinic A,C-diamide. NH(2) groups are provided by glutamine, and one molecule of ATP is hydrogenolyzed for each amidation. In Streptococcus sanguinis (strain SK36), this protein is Cobyric acid synthase.